A 400-amino-acid polypeptide reads, in one-letter code: Lysophospholipid transporter LplT (400 aa).

Transmembrane regions (helical) follow at residues 19 to 39, 53 to 73, 91 to 111, 139 to 159, 164 to 184, 227 to 247, 257 to 277, 281 to 301, 304 to 324, 352 to 372, and 373 to 393; these read VIVA…ATLA, VLQM…GQIA, AGAA…LVGI, LMEA…GVLA, IAAL…NLFI, LFWG…PVAL, YLNA…AKLV, TVSR…IFSL, ALLP…FFVV, NSAM…GVPA, and VAIG…LWIW.

The protein belongs to the major facilitator superfamily. LplT (TC 2.A.1.42) family.

It is found in the cell inner membrane. Catalyzes the facilitated diffusion of 2-acyl-glycero-3-phosphoethanolamine (2-acyl-GPE) into the cell. The protein is Lysophospholipid transporter LplT of Salmonella gallinarum (strain 287/91 / NCTC 13346).